Consider the following 196-residue polypeptide: ATP-dependent Clp protease proteolytic subunit (196 aa).

Serine 101 (nucleophile) is an active-site residue. Histidine 126 is an active-site residue.

The protein belongs to the peptidase S14 family. As to quaternary structure, component of the chloroplastic Clp protease core complex.

Its subcellular location is the plastid. It localises to the chloroplast stroma. It carries out the reaction Hydrolysis of proteins to small peptides in the presence of ATP and magnesium. alpha-casein is the usual test substrate. In the absence of ATP, only oligopeptides shorter than five residues are hydrolyzed (such as succinyl-Leu-Tyr-|-NHMec, and Leu-Tyr-Leu-|-Tyr-Trp, in which cleavage of the -Tyr-|-Leu- and -Tyr-|-Trp bonds also occurs).. In terms of biological role, cleaves peptides in various proteins in a process that requires ATP hydrolysis. Has a chymotrypsin-like activity. Plays a major role in the degradation of misfolded proteins. The polypeptide is ATP-dependent Clp protease proteolytic subunit (Lactuca sativa (Garden lettuce)).